Here is a 432-residue protein sequence, read N- to C-terminus: Sensor histidine kinase YrkQ (432 aa).

Topologically, residues 1 to 12 are cytoplasmic; it reads MAHLKFTLTKKL. Residues 13-33 traverse the membrane as a helical segment; sequence ALLIMVAAIVSGVIFLTLQKI. The Extracellular segment spans residues 34 to 145; the sequence is TDDLIEGYLS…GFYSSRYYDL (112 aa). A helical transmembrane segment spans residues 146 to 166; that stretch reads AFALDLLGATLIFLIIVLFGI. In terms of domain architecture, HAMP spans 167–219; that stretch reads RQSLRYLKTIHQEIHILEGGELDYEMTIKGHDELAMIAKSIEDLRKAFLDKLK. The Cytoplasmic portion of the chain corresponds to 167 to 432; it reads RQSLRYLKTI…IVLRFWNTKM (266 aa). A Histidine kinase domain is found at 234–432; it reads EMSHDMRTPL…IVLRFWNTKM (199 aa). His-237 bears the Phosphohistidine; by autocatalysis mark.

It is found in the cell membrane. It carries out the reaction ATP + protein L-histidine = ADP + protein N-phospho-L-histidine.. Member of the two-component regulatory system YrkQ/YrkP. Probably activates YrkP by phosphorylation. This Bacillus subtilis (strain 168) protein is Sensor histidine kinase YrkQ (yrkQ).